Reading from the N-terminus, the 340-residue chain is Glycerol-3-phosphate dehydrogenase [NAD(P)+] (340 aa).

The NADPH site is built by Ser-14, Tyr-15, His-35, and Lys-109. Sn-glycerol 3-phosphate is bound by residues Lys-109, Gly-138, and Thr-140. NADPH is bound at residue Ala-142. 5 residues coordinate sn-glycerol 3-phosphate: Lys-194, Asp-247, Ser-257, Arg-258, and Asn-259. Lys-194 functions as the Proton acceptor in the catalytic mechanism. Arg-258 contacts NADPH. Val-282 and Glu-284 together coordinate NADPH.

Belongs to the NAD-dependent glycerol-3-phosphate dehydrogenase family.

It is found in the cytoplasm. It catalyses the reaction sn-glycerol 3-phosphate + NAD(+) = dihydroxyacetone phosphate + NADH + H(+). The enzyme catalyses sn-glycerol 3-phosphate + NADP(+) = dihydroxyacetone phosphate + NADPH + H(+). It participates in membrane lipid metabolism; glycerophospholipid metabolism. Its function is as follows. Catalyzes the reduction of the glycolytic intermediate dihydroxyacetone phosphate (DHAP) to sn-glycerol 3-phosphate (G3P), the key precursor for phospholipid synthesis. This chain is Glycerol-3-phosphate dehydrogenase [NAD(P)+], found in Photorhabdus laumondii subsp. laumondii (strain DSM 15139 / CIP 105565 / TT01) (Photorhabdus luminescens subsp. laumondii).